Reading from the N-terminus, the 297-residue chain is 4-hydroxy-tetrahydrodipicolinate synthase (297 aa).

Residue Thr-49 participates in pyruvate binding. Residue Tyr-137 is the Proton donor/acceptor of the active site. Lys-166 acts as the Schiff-base intermediate with substrate in catalysis. Ile-208 serves as a coordination point for pyruvate.

Belongs to the DapA family. In terms of assembly, homotetramer; dimer of dimers.

The protein resides in the cytoplasm. The catalysed reaction is L-aspartate 4-semialdehyde + pyruvate = (2S,4S)-4-hydroxy-2,3,4,5-tetrahydrodipicolinate + H2O + H(+). Its pathway is amino-acid biosynthesis; L-lysine biosynthesis via DAP pathway; (S)-tetrahydrodipicolinate from L-aspartate: step 3/4. In terms of biological role, catalyzes the condensation of (S)-aspartate-beta-semialdehyde [(S)-ASA] and pyruvate to 4-hydroxy-tetrahydrodipicolinate (HTPA). This is 4-hydroxy-tetrahydrodipicolinate synthase from Porphyromonas gingivalis (strain ATCC 33277 / DSM 20709 / CIP 103683 / JCM 12257 / NCTC 11834 / 2561).